A 165-amino-acid chain; its full sequence is Chorismate pyruvate-lyase (165 aa).

Substrate-binding residues include M35, R77, L115, and E156.

Belongs to the UbiC family. In terms of assembly, monomer.

It is found in the cytoplasm. The catalysed reaction is chorismate = 4-hydroxybenzoate + pyruvate. Its pathway is cofactor biosynthesis; ubiquinone biosynthesis. In terms of biological role, removes the pyruvyl group from chorismate, with concomitant aromatization of the ring, to provide 4-hydroxybenzoate (4HB) for the ubiquinone pathway. The sequence is that of Chorismate pyruvate-lyase from Citrobacter koseri (strain ATCC BAA-895 / CDC 4225-83 / SGSC4696).